The sequence spans 94 residues: Small ribosomal subunit protein uS19 (94 aa).

Belongs to the universal ribosomal protein uS19 family.

Protein S19 forms a complex with S13 that binds strongly to the 16S ribosomal RNA. In Carboxydothermus hydrogenoformans (strain ATCC BAA-161 / DSM 6008 / Z-2901), this protein is Small ribosomal subunit protein uS19.